Reading from the N-terminus, the 153-residue chain is UPF0260 protein YcgN (153 aa).

The protein belongs to the UPF0260 family.

This chain is UPF0260 protein YcgN, found in Salmonella agona (strain SL483).